A 265-amino-acid chain; its full sequence is 3-methyl-2-oxobutanoate hydroxymethyltransferase (265 aa).

Mg(2+) contacts are provided by Asp-46 and Asp-85. 3-methyl-2-oxobutanoate-binding positions include 46-47 (DS), Asp-85, and Lys-114. Glu-116 contacts Mg(2+). Glu-183 serves as the catalytic Proton acceptor.

It belongs to the PanB family. Homodecamer; pentamer of dimers. Mg(2+) is required as a cofactor.

It localises to the cytoplasm. It carries out the reaction 3-methyl-2-oxobutanoate + (6R)-5,10-methylene-5,6,7,8-tetrahydrofolate + H2O = 2-dehydropantoate + (6S)-5,6,7,8-tetrahydrofolate. It functions in the pathway cofactor biosynthesis; coenzyme A biosynthesis. In terms of biological role, catalyzes the reversible reaction in which hydroxymethyl group from 5,10-methylenetetrahydrofolate is transferred onto alpha-ketoisovalerate to form ketopantoate. This Caldivirga maquilingensis (strain ATCC 700844 / DSM 13496 / JCM 10307 / IC-167) protein is 3-methyl-2-oxobutanoate hydroxymethyltransferase.